The chain runs to 185 residues: MFAVKHCLLVVAVGALVNVSVRAAEFSGVVNQGPVDVPFSGKPLDERAVGGKGEHTPPLPDERQQEPEEPVSQRASRVAEQLFRKFLKFAENVGHHSEKAFKKAKVVAEKGFTAAKTHTVRGFKVAKEAAGRGMVTVGKKLANVESDRSTTTTQAPDSPNGLAETEVPVEPQQRAAHVPVPDFSQ.

The N-terminal stretch at 1–23 is a signal peptide; that stretch reads MFAVKHCLLVVAVGALVNVSVRA. An N-linked (GlcNAc...) asparagine glycan is attached at Asn18. 2 disordered regions span residues 41-75 and 142-185; these read GKPLDERAVGGKGEHTPPLPDERQQEPEEPVSQRA and ANVE…DFSQ. Residues 43 to 66 are compositionally biased toward basic and acidic residues; it reads PLDERAVGGKGEHTPPLPDERQQE.

Post-translationally, may also be O-glycosylated. In terms of processing, the N-terminus is blocked.

The protein localises to the parasitophorous vacuole. Functionally, major granular component involved in excreted-secreted antigen (ESA) immunity. Possibly acts in conjunction with GRA1. The polypeptide is Dense granule protein 2 (GRA2) (Toxoplasma gondii).